The sequence spans 359 residues: MTSTSKGILRPFLIVCIILGCFVACLLIYIKPTNSWVFSPMESASSVLKMKNFFSRKTDYFNETTILVWVWPFGQTFDLTSCQAMFNIQGCHLTTDRSLYNKSHAVLIHHRDISWDLTNLPQQARPPFQKWIWMNLESPTHTPQKSGIEHLFNLTLTYRRDSDIQVPYGFLTVSTSPFVFEVPSKEKLVCWVVSNWNPEHARVKYYNELSKSIEIHTYGQAFGEYVNDKNLIPTISTCKFYLSFENSIHKDYITEKLYNAFLAGSVPVVLGPSRENYENYIPADSFIHVEDFNSPSELAKYLKEVDKNNKLYLSYFNWRKDFTVNLPRFWESHACLACDHVKRHQEYKSVGNLEKWFWN.

The Cytoplasmic segment spans residues 1-11 (MTSTSKGILRP). The helical; Signal-anchor for type II membrane protein transmembrane segment at 12 to 32 (FLIVCIILGCFVACLLIYIKP) threads the bilayer. Over 33 to 359 (TNSWVFSPME…VGNLEKWFWN (327 aa)) the chain is Lumenal. Residue N62 is glycosylated (N-linked (GlcNAc...) asparagine). The interval 63–168 (ETTILVWVWP…RRDSDIQVPY (106 aa)) is acceptor-binding. Q75 lines the a beta-D-galactosyl-(1-&gt;4)-N-acetyl-beta-D-glucosaminyl derivative pocket. 3 disulfide bridges follow: C82/C335, C91/C338, and C190/C238. Residue N101 is glycosylated (N-linked (GlcNAc...) asparagine). E137 contributes to the a beta-D-galactosyl-(1-&gt;4)-N-acetyl-beta-D-glucosaminyl derivative binding site. The Nucleophile role is filled by E137. Residue E137 participates in GDP-beta-L-fucose binding. N153 is a glycosylation site (N-linked (GlcNAc...) asparagine). Residues Y168, V192, S194, N195, R202, V226, Y241, N246, Y252, E255, and K256 each coordinate GDP-beta-L-fucose. Residues 169–326 (GFLTVSTSPF…NWRKDFTVNL (158 aa)) are donor-binding. An acceptor-binding region spans residues 327–359 (PRFWESHACLACDHVKRHQEYKSVGNLEKWFWN).

Belongs to the glycosyltransferase 10 family. As to quaternary structure, homodimer. In terms of processing, N-glycosylated with complex-type N-glycans.

The protein resides in the golgi apparatus. Its subcellular location is the trans-Golgi network membrane. It localises to the golgi apparatus membrane. The enzyme catalyses a beta-D-galactosyl-(1-&gt;4)-N-acetyl-beta-D-glucosaminyl derivative + GDP-beta-L-fucose = a beta-D-galactosyl-(1-&gt;4)-[alpha-L-fucosyl-(1-&gt;3)]-N-acetyl-beta-D-glucosaminyl derivative + GDP + H(+). The catalysed reaction is an alpha-Neu5Ac-(2-&gt;3)-beta-D-Gal-(1-&gt;4)-beta-D-GlcNAc-(1-&gt;3)-beta-D-Gal-(1-&gt;4)-beta-D-GlcNAc derivative + GDP-beta-L-fucose = an alpha-Neu5Ac-(2-&gt;3)-beta-D-Gal-(1-&gt;4)-beta-D-GlcNAc-(1-&gt;3)-beta-D-Gal-(1-&gt;4)-[alpha-L-Fuc-(1-&gt;3)]-beta-D-GlcNAc derivative + GDP + H(+). It catalyses the reaction alpha-N-glycoloylneuraminosyl-(2-&gt;3)-beta-D-galactosyl-(1-&gt;4)-N-acetyl-beta-D-glucosaminyl-(1-&gt;3)-beta-D-galactosyl-(1-&gt;4)-N-acetyl-beta-D-glucosaminyl-(1-&gt;3)-beta-D-galactosyl-(1-&gt;4)-beta-D-glucosyl-(1&lt;-&gt;1')-ceramide + GDP-beta-L-fucose = alpha-N-glycoloylneuraminosyl-(2-&gt;3)-beta-D-galactosyl-(1-&gt;4)-N-acetyl-beta-D-glucosaminyl-(1-&gt;3)-beta-D-galactosyl-(1-&gt;4)-[alpha-L-fucosyl-(1-&gt;3)]-N-acetyl-beta-D-glucosaminyl-(1-&gt;3)-beta-D-galactosyl-(1-&gt;4)-beta-D-glucosyl-(1&lt;-&gt;1')-ceramide + GDP + H(+). It carries out the reaction alpha-D-galactosyl-(1-&gt;3)-beta-D-galactosyl-(1-&gt;4)-N-acetyl-beta-D-glucosaminyl-(1-&gt;3)-beta-D-galactosyl-(1-&gt;4)-beta-D-glucosyl-(1&lt;-&gt;1')-ceramide + GDP-beta-L-fucose = a neolactoside IV(3)-alpha-Gal,III(3)-alpha-Fuc-nLc4Cer + GDP + H(+). The enzyme catalyses a neolactoside nLc4Cer + GDP-beta-L-fucose = a neolactoside III(3)-alpha-Fuc-nLc4Cer + GDP + H(+). The catalysed reaction is an N-acetyl-alpha-neuraminyl-(2-&gt;3)-beta-D-galactosyl-(1-&gt;4)-N-acetyl-beta-D-glucosaminyl derivative + GDP-beta-L-fucose = an alpha-Neu5Ac-(2-&gt;3)-beta-D-Gal-(1-&gt;4)-[alpha-L-Fuc-(1-&gt;3)]-beta-D-GlcNAc derivative + GDP + H(+). It catalyses the reaction beta-D-Gal-(1-&gt;4)-beta-D-GlcNAc-(1-&gt;3)-beta-D-Gal-(1-&gt;4)-D-Glc + GDP-beta-L-fucose = beta-D-Gal-(1-&gt;4)-[alpha-L-Fuc-(1-&gt;3)]-beta-D-GlcNAc-(1-&gt;3)-beta-D-Gal-(1-&gt;4)-D-Glc + GDP + H(+). It carries out the reaction an alpha-L-Fuc-(1-&gt;2)-beta-D-Gal-(1-&gt;4)-beta-D-GlcNAc derivative + GDP-beta-L-fucose = an alpha-L-Fuc-(1-&gt;2)-beta-D-Gal-(1-&gt;4)-[alpha-L-Fuc-(1-&gt;3)]-beta-D-GlcNAc derivative + GDP + H(+). The protein operates within protein modification; protein glycosylation. It participates in glycolipid biosynthesis. Activated by Mn2+. Its function is as follows. Catalyzes alpha(1-&gt;3) linkage of fucosyl moiety transferred from GDP-beta-L-fucose to N-acetyl glucosamine (GlcNAc) within type 2 lactosamine (LacNAc, beta-D-Gal-(1-&gt;4)-beta-D-GlcNAc-) glycan attached to glycolipids and N- or O-linked glycoproteins. Fucosylates distal type 2 LacNAc and its fucosylated (H-type 2 LacNAc) and sialylated (sialyl-type 2 LacNAc) derivatives to form Lewis x (Lex) (CD15) and Lewis y (Ley) antigenic epitopes involved in cell adhesion and differentiation. Generates Lex epitopes in the brain, presumably playing a role in the maintenance of neuronal stemness and neurite outgrowth in progenitor neural cells. Fucosylates the internal type 2 LacNAc unit of the polylactosamine chain to form VIM-2 antigen that serves as recognition epitope for SELE. Can also modify milk oligosaccharides in particular type 2 tetrasaccharide LNnT. The polypeptide is 4-galactosyl-N-acetylglucosaminide 3-alpha-L-fucosyltransferase 9 (Rattus norvegicus (Rat)).